The following is a 247-amino-acid chain: 5-oxoprolinase subunit A (247 aa).

Belongs to the LamB/PxpA family. As to quaternary structure, forms a complex composed of PxpA, PxpB and PxpC.

The enzyme catalyses 5-oxo-L-proline + ATP + 2 H2O = L-glutamate + ADP + phosphate + H(+). Its function is as follows. Catalyzes the cleavage of 5-oxoproline to form L-glutamate coupled to the hydrolysis of ATP to ADP and inorganic phosphate. This chain is 5-oxoprolinase subunit A, found in Histophilus somni (strain 129Pt) (Haemophilus somnus).